An 864-amino-acid polypeptide reads, in one-letter code: DNA mismatch repair protein MutS (864 aa).

607–614 (GPNMGGKS) is an ATP binding site.

Belongs to the DNA mismatch repair MutS family.

Functionally, this protein is involved in the repair of mismatches in DNA. It is possible that it carries out the mismatch recognition step. This protein has a weak ATPase activity. In Neisseria gonorrhoeae (strain ATCC 700825 / FA 1090), this protein is DNA mismatch repair protein MutS.